We begin with the raw amino-acid sequence, 360 residues long: 3-dehydroquinate synthase (360 aa).

Residues 69 to 74, 103 to 107, 127 to 128, Lys140, Lys149, and 167 to 170 each bind NAD(+); these read DGEAYK, GVIGD, TT, and CLQT. The Zn(2+) site is built by Glu182, His245, and His262.

The protein belongs to the sugar phosphate cyclases superfamily. Dehydroquinate synthase family. Requires Co(2+) as cofactor. Zn(2+) is required as a cofactor. NAD(+) serves as cofactor.

It is found in the cytoplasm. It carries out the reaction 7-phospho-2-dehydro-3-deoxy-D-arabino-heptonate = 3-dehydroquinate + phosphate. It participates in metabolic intermediate biosynthesis; chorismate biosynthesis; chorismate from D-erythrose 4-phosphate and phosphoenolpyruvate: step 2/7. Catalyzes the conversion of 3-deoxy-D-arabino-heptulosonate 7-phosphate (DAHP) to dehydroquinate (DHQ). The sequence is that of 3-dehydroquinate synthase from Aeromonas hydrophila subsp. hydrophila (strain ATCC 7966 / DSM 30187 / BCRC 13018 / CCUG 14551 / JCM 1027 / KCTC 2358 / NCIMB 9240 / NCTC 8049).